The primary structure comprises 171 residues: NADH-quinone oxidoreductase subunit I 1 (171 aa).

4Fe-4S ferredoxin-type domains lie at 39 to 71 and 81 to 110; these read IVLTRDPDGQERCVACNLCAAVCPVGCIDLSKA and EHFRINFARCIFCGFCEEACPTAAIQLTPD. Residues C51, C54, C57, C61, C90, C93, C96, and C100 each contribute to the [4Fe-4S] cluster site.

It belongs to the complex I 23 kDa subunit family. NDH-1 is composed of 14 different subunits. Subunits NuoA, H, J, K, L, M, N constitute the membrane sector of the complex. [4Fe-4S] cluster serves as cofactor.

The protein resides in the cell inner membrane. It carries out the reaction a quinone + NADH + 5 H(+)(in) = a quinol + NAD(+) + 4 H(+)(out). Functionally, NDH-1 shuttles electrons from NADH, via FMN and iron-sulfur (Fe-S) centers, to quinones in the respiratory chain. The immediate electron acceptor for the enzyme in this species is believed to be ubiquinone. Couples the redox reaction to proton translocation (for every two electrons transferred, four hydrogen ions are translocated across the cytoplasmic membrane), and thus conserves the redox energy in a proton gradient. The polypeptide is NADH-quinone oxidoreductase subunit I 1 (Rhodopseudomonas palustris (strain HaA2)).